The primary structure comprises 201 residues: Holliday junction branch migration complex subunit RuvA (201 aa).

The tract at residues 1–64 is domain I; sequence MFAYIKGVLA…EFSHTLYGFL (64 aa). The tract at residues 65-143 is domain II; sequence SYQERDIFEI…AIGHLDTSDH (79 aa). Residues 144–153 are flexible linker; it reads IEPLTQDPKS. The segment at 153–201 is domain III; it reads SKSVQDAMLALINLGYNQTTAQKAIKQGMKELPEEIDLAQLITVALKHV.

This sequence belongs to the RuvA family. In terms of assembly, homotetramer. Forms an RuvA(8)-RuvB(12)-Holliday junction (HJ) complex. HJ DNA is sandwiched between 2 RuvA tetramers; dsDNA enters through RuvA and exits via RuvB. An RuvB hexamer assembles on each DNA strand where it exits the tetramer. Each RuvB hexamer is contacted by two RuvA subunits (via domain III) on 2 adjacent RuvB subunits; this complex drives branch migration. In the full resolvosome a probable DNA-RuvA(4)-RuvB(12)-RuvC(2) complex forms which resolves the HJ.

It is found in the cytoplasm. Its function is as follows. The RuvA-RuvB-RuvC complex processes Holliday junction (HJ) DNA during genetic recombination and DNA repair, while the RuvA-RuvB complex plays an important role in the rescue of blocked DNA replication forks via replication fork reversal (RFR). RuvA specifically binds to HJ cruciform DNA, conferring on it an open structure. The RuvB hexamer acts as an ATP-dependent pump, pulling dsDNA into and through the RuvAB complex. HJ branch migration allows RuvC to scan DNA until it finds its consensus sequence, where it cleaves and resolves the cruciform DNA. The protein is Holliday junction branch migration complex subunit RuvA of Protochlamydia amoebophila (strain UWE25).